The chain runs to 335 residues: 4-hydroxythreonine-4-phosphate dehydrogenase (335 aa).

Residue T132 coordinates substrate. Residues H163, H208, and H263 each coordinate a divalent metal cation. The substrate site is built by K271, N280, and R289.

It belongs to the PdxA family. As to quaternary structure, homodimer. The cofactor is Zn(2+). Mg(2+) serves as cofactor. Requires Co(2+) as cofactor.

It localises to the cytoplasm. It carries out the reaction 4-(phosphooxy)-L-threonine + NAD(+) = 3-amino-2-oxopropyl phosphate + CO2 + NADH. It participates in cofactor biosynthesis; pyridoxine 5'-phosphate biosynthesis; pyridoxine 5'-phosphate from D-erythrose 4-phosphate: step 4/5. Catalyzes the NAD(P)-dependent oxidation of 4-(phosphooxy)-L-threonine (HTP) into 2-amino-3-oxo-4-(phosphooxy)butyric acid which spontaneously decarboxylates to form 3-amino-2-oxopropyl phosphate (AHAP). The protein is 4-hydroxythreonine-4-phosphate dehydrogenase of Zymomonas mobilis subsp. mobilis (strain ATCC 31821 / ZM4 / CP4).